The following is a 142-amino-acid chain: Large ribosomal subunit protein uL13 (142 aa).

Belongs to the universal ribosomal protein uL13 family. In terms of assembly, part of the 50S ribosomal subunit.

Its function is as follows. This protein is one of the early assembly proteins of the 50S ribosomal subunit, although it is not seen to bind rRNA by itself. It is important during the early stages of 50S assembly. This Maridesulfovibrio salexigens (strain ATCC 14822 / DSM 2638 / NCIMB 8403 / VKM B-1763) (Desulfovibrio salexigens) protein is Large ribosomal subunit protein uL13.